The following is an 885-amino-acid chain: Sensor histidine kinase KdpD (885 aa).

Helical transmembrane passes span 384–404 (AIDMLKMILIQIICVMMGLWI), 415–435 (IILMIFLIGIILLSIWTRSFI), 436–456 (IGFLAAIINVFVFNYFFTEPR), and 464–484 (FDYPITFIVSILTSILTSALL). The Histidine kinase domain maps to 660–880 (SISHDIRTPL…IFYFNIYTDF (221 aa)). At histidine 663 the chain carries Phosphohistidine; by autocatalysis.

The protein localises to the membrane. The catalysed reaction is ATP + protein L-histidine = ADP + protein N-phospho-L-histidine.. With respect to regulation, cyclic di-AMP is a negative regulator of the Kdp system. Its function is as follows. Member of the two-component regulatory system KdpD/KdpE that regulates the transcription of a series of virulence factors through sensing external K(+) concentrations. Also regulates capsular polysaccharide production. May function as a membrane-associated protein kinase that phosphorylates KdpE in response to environmental signals. In turn, KpdE functions as a transcriptional regulator by direct binding to promoter regions of target genes including spa, hla, aur and geh. This chain is Sensor histidine kinase KdpD, found in Staphylococcus aureus (strain NCTC 8325 / PS 47).